Reading from the N-terminus, the 181-residue chain is Large ribosomal subunit protein uL5 (181 aa).

It belongs to the universal ribosomal protein uL5 family. In terms of assembly, part of the 50S ribosomal subunit; part of the 5S rRNA/L5/L18/L25 subcomplex. Contacts the 5S rRNA and the P site tRNA. Forms a bridge to the 30S subunit in the 70S ribosome.

In terms of biological role, this is one of the proteins that bind and probably mediate the attachment of the 5S RNA into the large ribosomal subunit, where it forms part of the central protuberance. In the 70S ribosome it contacts protein S13 of the 30S subunit (bridge B1b), connecting the 2 subunits; this bridge is implicated in subunit movement. Contacts the P site tRNA; the 5S rRNA and some of its associated proteins might help stabilize positioning of ribosome-bound tRNAs. This chain is Large ribosomal subunit protein uL5, found in Helicobacter pylori (strain G27).